Here is a 314-residue protein sequence, read N- to C-terminus: Protein phosphatase PTC7 homolog fig (314 aa).

One can recognise a PPM-type phosphatase domain in the interval 43 to 309; sequence PYLVTVVQGR…DDITLILSSV (267 aa). Mn(2+) contacts are provided by D87, G88, and D232.

Belongs to the PP2C family. Requires Mg(2+) as cofactor. Mn(2+) is required as a cofactor.

It carries out the reaction O-phospho-L-seryl-[protein] + H2O = L-seryl-[protein] + phosphate. The catalysed reaction is O-phospho-L-threonyl-[protein] + H2O = L-threonyl-[protein] + phosphate. The protein is Protein phosphatase PTC7 homolog fig of Drosophila simulans (Fruit fly).